Consider the following 61-residue polypeptide: Probable pancreatic secretory proteinase inhibitor (61 aa).

Positions 6-61 (LYRKPSCGEMSAMHACPMNFAPVCGTDGNTYPNECSLCFQRQNTKTDILITKDDRC) constitute a Kazal-like domain. Cystine bridges form between Cys12–Cys43, Cys21–Cys40, and Cys29–Cys61.

It is found in the secreted. The protein is Probable pancreatic secretory proteinase inhibitor of Anguilla anguilla (European freshwater eel).